Reading from the N-terminus, the 208-residue chain is Pyridoxal 5'-phosphate synthase subunit PdxT (208 aa).

Residue 46 to 48 (GES) participates in L-glutamine binding. The active-site Nucleophile is Cys-78. L-glutamine is bound by residues Arg-105 and 156-157 (IR). Residues His-192 and Glu-194 each act as charge relay system in the active site.

It belongs to the glutaminase PdxT/SNO family. As to quaternary structure, in the presence of PdxS, forms a dodecamer of heterodimers. Only shows activity in the heterodimer.

The enzyme catalyses aldehydo-D-ribose 5-phosphate + D-glyceraldehyde 3-phosphate + L-glutamine = pyridoxal 5'-phosphate + L-glutamate + phosphate + 3 H2O + H(+). It carries out the reaction L-glutamine + H2O = L-glutamate + NH4(+). It functions in the pathway cofactor biosynthesis; pyridoxal 5'-phosphate biosynthesis. Its function is as follows. Catalyzes the hydrolysis of glutamine to glutamate and ammonia as part of the biosynthesis of pyridoxal 5'-phosphate. The resulting ammonia molecule is channeled to the active site of PdxS. The chain is Pyridoxal 5'-phosphate synthase subunit PdxT from Bifidobacterium adolescentis (strain ATCC 15703 / DSM 20083 / NCTC 11814 / E194a).